Reading from the N-terminus, the 147-residue chain is Lysozyme C-1 (147 aa).

Positions 1–18 (MKALLTLVFCLLPLAAQG) are cleaved as a signal peptide. Positions 19–147 (KVYSRCELAA…VSKWIRGCRL (129 aa)) constitute a C-type lysozyme domain. 4 cysteine pairs are disulfide-bonded: cysteine 24/cysteine 145, cysteine 48/cysteine 133, cysteine 82/cysteine 98, and cysteine 94/cysteine 112. Catalysis depends on residues glutamate 53 and aspartate 70.

It belongs to the glycosyl hydrolase 22 family.

Its subcellular location is the secreted. It catalyses the reaction Hydrolysis of (1-&gt;4)-beta-linkages between N-acetylmuramic acid and N-acetyl-D-glucosamine residues in a peptidoglycan and between N-acetyl-D-glucosamine residues in chitodextrins.. Lysozymes have primarily a bacteriolytic function; those in tissues and body fluids are associated with the monocyte-macrophage system and enhance the activity of immunoagents. In Anas platyrhynchos (Mallard), this protein is Lysozyme C-1.